The primary structure comprises 589 residues: Probable methyltransferase PMT23 (589 aa).

The Cytoplasmic segment spans residues 1-4 (MAIS). Residues 5–25 (VQHVVVLLLSTLLIAITFFLF) form a helical; Signal-anchor for type II membrane protein membrane-spanning segment. Topologically, residues 26–589 (TSDNARFPFP…FWRPAKPELR (564 aa)) are lumenal. N70, N375, and N442 each carry an N-linked (GlcNAc...) asparagine glycan.

It belongs to the methyltransferase superfamily.

The protein localises to the golgi apparatus membrane. The chain is Probable methyltransferase PMT23 from Arabidopsis thaliana (Mouse-ear cress).